A 147-amino-acid chain; its full sequence is MSTVTLLGERLAEVGTEFVYGGETDACEGCPYREQCLNLTEGRRYRVTGVRDSGTLECAVHDTGVTAVEVEPAPVLANVDANAAYAGSKASLVGPCPYTECPSHEFCEPDGADFDEEYQITEVVGDPPHDYCMLDRELQLVQFAAEE.

This sequence belongs to the UPF0179 family.

In Natronomonas pharaonis (strain ATCC 35678 / DSM 2160 / CIP 103997 / JCM 8858 / NBRC 14720 / NCIMB 2260 / Gabara) (Halobacterium pharaonis), this protein is UPF0179 protein NP_3406A.